The chain runs to 161 residues: Ubiquitin-conjugating enzyme E2Q-like protein 1 (161 aa).

In terms of domain architecture, UBC core spans 1–154 (MKELQDIARL…VKTHEKYGWV (154 aa)). Residue cysteine 88 is the Glycyl thioester intermediate of the active site.

It belongs to the ubiquitin-conjugating enzyme family. As to quaternary structure, interacts with FBXW7.

Its subcellular location is the nucleus. The catalysed reaction is S-ubiquitinyl-[E1 ubiquitin-activating enzyme]-L-cysteine + [E2 ubiquitin-conjugating enzyme]-L-cysteine = [E1 ubiquitin-activating enzyme]-L-cysteine + S-ubiquitinyl-[E2 ubiquitin-conjugating enzyme]-L-cysteine.. The protein operates within protein modification; protein ubiquitination. Its function is as follows. Probable E2 ubiquitin-protein ligase that catalyzes the covalent attachment of ubiquitin to target proteins. May facilitate the monoubiquitination and degradation of MTOR and CCNE1 through interaction with FBXW7. The chain is Ubiquitin-conjugating enzyme E2Q-like protein 1 (Ube2ql1) from Mus musculus (Mouse).